The following is a 61-amino-acid chain: Large ribosomal subunit protein uL30 (61 aa).

This sequence belongs to the universal ribosomal protein uL30 family. Part of the 50S ribosomal subunit.

The chain is Large ribosomal subunit protein uL30 from Rubrobacter xylanophilus (strain DSM 9941 / JCM 11954 / NBRC 16129 / PRD-1).